We begin with the raw amino-acid sequence, 251 residues long: tRNA pseudouridine synthase A 1 (251 aa).

The active-site Nucleophile is D52. Y110 lines the substrate pocket.

Belongs to the tRNA pseudouridine synthase TruA family. Homodimer.

It catalyses the reaction uridine(38/39/40) in tRNA = pseudouridine(38/39/40) in tRNA. In terms of biological role, formation of pseudouridine at positions 38, 39 and 40 in the anticodon stem and loop of transfer RNAs. This Desulfotalea psychrophila (strain LSv54 / DSM 12343) protein is tRNA pseudouridine synthase A 1.